The sequence spans 157 residues: 2-C-methyl-D-erythritol 2,4-cyclodiphosphate synthase (157 aa).

Positions 8 and 10 each coordinate a divalent metal cation. Residues 8–10 (DVH) and 34–35 (HS) contribute to the 4-CDP-2-C-methyl-D-erythritol 2-phosphate site. A divalent metal cation is bound at residue H42. Residues 56–58 (DIG), 61–65 (FPDTD), 100–106 (AQAPKMA), 132–135 (TTTE), F139, and R142 contribute to the 4-CDP-2-C-methyl-D-erythritol 2-phosphate site.

This sequence belongs to the IspF family. As to quaternary structure, homotrimer. The cofactor is a divalent metal cation.

It carries out the reaction 4-CDP-2-C-methyl-D-erythritol 2-phosphate = 2-C-methyl-D-erythritol 2,4-cyclic diphosphate + CMP. Its pathway is isoprenoid biosynthesis; isopentenyl diphosphate biosynthesis via DXP pathway; isopentenyl diphosphate from 1-deoxy-D-xylulose 5-phosphate: step 4/6. Functionally, involved in the biosynthesis of isopentenyl diphosphate (IPP) and dimethylallyl diphosphate (DMAPP), two major building blocks of isoprenoid compounds. Catalyzes the conversion of 4-diphosphocytidyl-2-C-methyl-D-erythritol 2-phosphate (CDP-ME2P) to 2-C-methyl-D-erythritol 2,4-cyclodiphosphate (ME-CPP) with a corresponding release of cytidine 5-monophosphate (CMP). In Pseudomonas fluorescens (strain ATCC BAA-477 / NRRL B-23932 / Pf-5), this protein is 2-C-methyl-D-erythritol 2,4-cyclodiphosphate synthase.